Reading from the N-terminus, the 108-residue chain is Synaptobrevin-1 (108 aa).

The interval 1 to 25 (MDAQGDAGAQGGSQGPRPSNKRLQQ) is disordered. At 1-85 (MDAQGDAGAQ…KRKYWWKNIK (85 aa)) the chain is on the cytoplasmic side. The 61-residue stretch at 22–82 (RLQQTQAQVD…ATLKRKYWWK (61 aa)) folds into the v-SNARE coiled-coil homology domain. The chain crosses the membrane as a helical; Anchor for type IV membrane protein span at residues 86 to 106 (MMIIMCAIVVILIIIIVLWAG). The Extracellular segment spans residues 107-108 (GK).

It belongs to the synaptobrevin family. In terms of assembly, part of the SNARE core complex containing CBG09569/SNAP25, snb-1/VAMP2 and CBG03570/STX1A. This complex binds to cpx-1/CPLX1.

The protein resides in the cytoplasmic vesicle. The protein localises to the secretory vesicle. It is found in the synaptic vesicle membrane. Its subcellular location is the cell membrane. It localises to the synapse. The protein resides in the synaptosome. Functionally, involved in the targeting and/or fusion of transport vesicles to their target membrane. Acts in neuronal exocytosis of synaptic transmission. Likely to have a role in cholinergic transmisson. Required for viability, coordinated movement and M3 pharynx motor neuron function. In Caenorhabditis briggsae, this protein is Synaptobrevin-1.